Consider the following 427-residue polypeptide: Peptidase B (427 aa).

Positions 195 and 200 each coordinate Mn(2+). Residue Lys207 is part of the active site. Residues Asp218, Asp277, and Glu279 each contribute to the Mn(2+) site. Arg281 is an active-site residue.

The protein belongs to the peptidase M17 family. Homohexamer. Requires Mn(2+) as cofactor.

Its subcellular location is the cytoplasm. The enzyme catalyses Release of an N-terminal amino acid, Xaa, from a peptide or arylamide. Xaa is preferably Glu or Asp but may be other amino acids, including Leu, Met, His, Cys and Gln.. Probably plays an important role in intracellular peptide degradation. In Salmonella choleraesuis (strain SC-B67), this protein is Peptidase B.